Here is a 354-residue protein sequence, read N- to C-terminus: Chorismate synthase (354 aa).

NADP(+)-binding residues include arginine 48 and arginine 54. Residues 125 to 127, 238 to 239, glycine 278, 293 to 297, and arginine 319 contribute to the FMN site; these read RSS, NA, and KPTSS.

This sequence belongs to the chorismate synthase family. In terms of assembly, homotetramer. The cofactor is FMNH2.

It carries out the reaction 5-O-(1-carboxyvinyl)-3-phosphoshikimate = chorismate + phosphate. It participates in metabolic intermediate biosynthesis; chorismate biosynthesis; chorismate from D-erythrose 4-phosphate and phosphoenolpyruvate: step 7/7. Functionally, catalyzes the anti-1,4-elimination of the C-3 phosphate and the C-6 proR hydrogen from 5-enolpyruvylshikimate-3-phosphate (EPSP) to yield chorismate, which is the branch point compound that serves as the starting substrate for the three terminal pathways of aromatic amino acid biosynthesis. This reaction introduces a second double bond into the aromatic ring system. This Blochmanniella pennsylvanica (strain BPEN) protein is Chorismate synthase.